Here is a 1287-residue protein sequence, read N- to C-terminus: Pullulanase A (1287 aa).

An N-terminal signal peptide occupies residues 1–44 (MRKTPSHTEKKMVYSIRSLKNGTGSVLIGASLVLLAMATPTISS). The segment at 42 to 139 (ISSDESTPTT…VTTETKAEEP (98 aa)) is disordered. A compositionally biased stretch (low complexity) spans 48-61 (TPTTNEPNNRNTTT). Residues 79-90 (DISSPGNANASL) are compositionally biased toward polar residues. Low complexity-rich tracts occupy residues 99–113 (TEPT…DPAP) and 122–133 (EPTTSTSPVTTE). Substrate-binding positions include 163-165 (WTW), Trp175, Asp221, 270-272 (WYW), Trp283, Lys325, and Asn330. 2 residues coordinate Ca(2+): Ser668 and Tyr670. Residues 674-675 (YD) and Phe750 contribute to the substrate site. The active-site Nucleophile is Asp785. Glu814 serves as the catalytic Proton donor. Trp816 contacts substrate. Residues Met835, Thr838, and Asp839 each coordinate Ca(2+). 3 residues coordinate substrate: Asp846, Arg849, and Tyr856. The Ca(2+) site is built by Asp889 and Asp893. Residues Asn903, Lys976, and 996–998 (DSY) each bind substrate. Residue Asp999 coordinates Ca(2+). A disordered region spans residues 1147–1255 (VSQNGTSHES…TPDRQAELPN (109 aa)). Residues 1156-1203 (STAEEKPDSTPSKPEHQNEASHPAHQDPAPEARPDSTKPDAKVADAEN) show a composition bias toward basic and acidic residues. Residues 1212–1225 (SQAEQPAQEAQASS) are compositionally biased toward low complexity. Residues 1228-1239 (EAVRKESVENSS) are compositionally biased toward basic and acidic residues. Positions 1253-1257 (LPNTG) match the LPXTG sorting signal motif. Thr1256 carries the post-translational modification Pentaglycyl murein peptidoglycan amidated threonine. Residues 1257 to 1287 (GIKNENKLLFAGISLLALLGLGFLLKNKKEN) constitute a propeptide, removed by sortase.

It belongs to the glycosyl hydrolase 13 family.

The protein localises to the secreted. Its subcellular location is the cell wall. The protein resides in the cell surface. The catalysed reaction is Hydrolysis of (1-&gt;6)-alpha-D-glucosidic linkages in pullulan, amylopectin and glycogen, and in the alpha- and beta-limit dextrins of amylopectin and glycogen.. Its activity is regulated as follows. Inhibited by 4-O-alpha-D-glucopyranosylmoranoline (G1M). In terms of biological role, virulence factor. Involved in the degradation of glycogen of the mammalian host cells. Hydrolyzes the alpha-1,6-branchpoints of glycogen. Hydrolyzes pullulan. Does not hydrolyze dextran. Binds to mouse lung alveolar type II cells that are rich in glycogen stores. Is an alpha-glucan-specific carbohydrate-binding protein, which binds to amylose (pure alpha-(1,4)-linked glucose), amylopectin (alpha-(1,4)-linked glucose with alpha-(1,6) branch points), pullulan (linear polymer of mixed alpha-(1,4)- and alpha-(1,6)-linked glucose) and glycogen (similar to amylopectin with more frequent alpha-(1,6) branch points) in vitro. Does not bind to dextran (a linear polymer of alpha-(1,6)-linked glucose). This is Pullulanase A from Streptococcus pneumoniae.